A 465-amino-acid chain; its full sequence is Polyadenylation factor subunit 2 (465 aa).

The span at 1–20 (MDGHNQNQYQNQNQIQQSQQ) shows a compositional bias: low complexity. Residues 1–26 (MDGHNQNQYQNQNQIQQSQQPPLKKY) are disordered. WD repeat units lie at residues 133 to 163 (AHDS…KIWQ), 175 to 205 (AHTE…KIWN), 217 to 247 (GHHW…KLWD), 259 to 290 (KFKH…RVFD), and 348 to 378 (AHDK…RFWT). Residues 417–465 (EFGAAPPPPATLEPHALPNMNGFINKKPRQEIPGIDSNIKSSTLPGLSI) are disordered. Polar residues predominate over residues 454-465 (NIKSSTLPGLSI).

As to quaternary structure, component of the cleavage and polyadenylation factor (CPF) complex, which is composed of at least PTI1, SYC1, SSU72, GLC7, MPE1, REF2, PFS2, PTA1, YSH1/BRR5, SWD2, CFT2/YDH1, YTH1, CFT1/YHH1, FIP1 and PAP1. Interacts with YSH1/BRR5, FIP1 and RNA14.

The protein resides in the nucleus. Integral and essential component of the cleavage and polyadenylation factor (CPF) complex, which plays a key role in polyadenylation-dependent pre-mRNA 3'-end formation and cooperates with cleavage factors including the CFIA complex and NAB4/CFIB. May bridge the CPF and CFIA complexes. The protein is Polyadenylation factor subunit 2 (PFS2) of Saccharomyces cerevisiae (strain ATCC 204508 / S288c) (Baker's yeast).